We begin with the raw amino-acid sequence, 452 residues long: MSQRKYFGTDGVRGEVGGPVINAAFALRLGYAAGRVLAREHREHASGRGRNRPQVVIGKDTRISGYMLESALEAGLSAAGIDVLLAGPVPTPAVAYLTRTLRLAAGIVISASHNPYQDNGIKFFSAHGMKLPDDIEAAIEQALDEPLGCVGSEELGRARRMADAQGRYIEFCKSTFPHDLDLNGLKLVVDAAHGAAYNVAPHVFRELGAEVHAIGVSPDGFNINKGVGALHPESLAEEVRARGADLGIALDGDADRLQMVDGTGRIYNGDELLYAIVRERMQRGPVAGVVGTLMTNYGLERQLQQIGVGFERANVGDRYVLEQMQARGWLYGGESSGHLLCLDCHTTGDGTIAALQVLTALRRADATLAEWVADLRMYPQKMINVPLAPGLDWKTHDGLARARGAVEAELAGRGRVLIRASGTEPKLRLMVEAEDEALAQASAQKLADSLGA.

Catalysis depends on Ser-112, which acts as the Phosphoserine intermediate. Mg(2+) is bound by residues Ser-112, Asp-251, Asp-253, and Asp-255. Ser-112 carries the phosphoserine modification.

This sequence belongs to the phosphohexose mutase family. It depends on Mg(2+) as a cofactor. In terms of processing, activated by phosphorylation.

The enzyme catalyses alpha-D-glucosamine 1-phosphate = D-glucosamine 6-phosphate. Functionally, catalyzes the conversion of glucosamine-6-phosphate to glucosamine-1-phosphate. This Bordetella bronchiseptica (strain ATCC BAA-588 / NCTC 13252 / RB50) (Alcaligenes bronchisepticus) protein is Phosphoglucosamine mutase.